We begin with the raw amino-acid sequence, 188 residues long: Holliday junction branch migration complex subunit RuvA (188 aa).

The segment at Met1 to Ser64 is domain I. A domain II region spans residues Asn65–Tyr143. Position 143 (Tyr143) is a region of interest, flexible linker. A domain III region spans residues Tyr143–Ser186.

This sequence belongs to the RuvA family. As to quaternary structure, homotetramer. Forms an RuvA(8)-RuvB(12)-Holliday junction (HJ) complex. HJ DNA is sandwiched between 2 RuvA tetramers; dsDNA enters through RuvA and exits via RuvB. An RuvB hexamer assembles on each DNA strand where it exits the tetramer. Each RuvB hexamer is contacted by two RuvA subunits (via domain III) on 2 adjacent RuvB subunits; this complex drives branch migration. In the full resolvosome a probable DNA-RuvA(4)-RuvB(12)-RuvC(2) complex forms which resolves the HJ.

It is found in the cytoplasm. Its function is as follows. The RuvA-RuvB-RuvC complex processes Holliday junction (HJ) DNA during genetic recombination and DNA repair, while the RuvA-RuvB complex plays an important role in the rescue of blocked DNA replication forks via replication fork reversal (RFR). RuvA specifically binds to HJ cruciform DNA, conferring on it an open structure. The RuvB hexamer acts as an ATP-dependent pump, pulling dsDNA into and through the RuvAB complex. HJ branch migration allows RuvC to scan DNA until it finds its consensus sequence, where it cleaves and resolves the cruciform DNA. Promotes Holliday junction (HJ) branch migration in conjunction with RuvB. This chain is Holliday junction branch migration complex subunit RuvA, found in Thermotoga maritima (strain ATCC 43589 / DSM 3109 / JCM 10099 / NBRC 100826 / MSB8).